The chain runs to 489 residues: Cobyric acid synthase (489 aa).

Residues 251-439 form the GATase cobBQ-type domain; it reads RLTVVAPVYP…LHGLFDTPAA (189 aa). Residue Cys-332 is the Nucleophile of the active site. His-431 is an active-site residue.

It belongs to the CobB/CobQ family. CobQ subfamily.

It functions in the pathway cofactor biosynthesis; adenosylcobalamin biosynthesis. Its function is as follows. Catalyzes amidations at positions B, D, E, and G on adenosylcobyrinic A,C-diamide. NH(2) groups are provided by glutamine, and one molecule of ATP is hydrogenolyzed for each amidation. This Aromatoleum aromaticum (strain DSM 19018 / LMG 30748 / EbN1) (Azoarcus sp. (strain EbN1)) protein is Cobyric acid synthase.